Consider the following 310-residue polypeptide: tRNA uridine(34) hydroxylase (310 aa).

Residues 134–232 enclose the Rhodanese domain; sequence DDPDTLLIDT…YFEEVSQTES (99 aa). The active-site Cysteine persulfide intermediate is C192.

It belongs to the TrhO family.

It catalyses the reaction uridine(34) in tRNA + AH2 + O2 = 5-hydroxyuridine(34) in tRNA + A + H2O. Catalyzes oxygen-dependent 5-hydroxyuridine (ho5U) modification at position 34 in tRNAs. In Prochlorococcus marinus (strain MIT 9313), this protein is tRNA uridine(34) hydroxylase.